A 354-amino-acid polypeptide reads, in one-letter code: Serum paraoxonase/lactonase 3 (354 aa).

Residue Asn29 is glycosylated (N-linked (GlcNAc...) asparagine). Cys42 and Cys352 are disulfide-bonded. Glu53 and Asp54 together coordinate Ca(2+). His114 functions as the Proton acceptor in the catalytic mechanism. Ile116 contacts Ca(2+). Ser165 carries the phosphoserine modification. Ca(2+) contacts are provided by Asn167, Asp168, Asn223, Asp268, and Asn269. N-linked (GlcNAc...) asparagine glycans are attached at residues Asn269 and Asn323.

The protein belongs to the paraoxonase family. In terms of assembly, homodimer. The cofactor is Ca(2+). In terms of processing, the signal sequence is not cleaved.

It localises to the secreted. The protein resides in the extracellular space. The catalysed reaction is a phenyl acetate + H2O = a phenol + acetate + H(+). The enzyme catalyses An aryl dialkyl phosphate + H2O = dialkyl phosphate + an aryl alcohol.. It catalyses the reaction an N-acyl-L-homoserine lactone + H2O = an N-acyl-L-homoserine + H(+). Functionally, has low activity towards the organophosphate paraxon and aromatic carboxylic acid esters. Rapidly hydrolyzes lactones such as statin prodrugs (e.g. lovastatin). Hydrolyzes aromatic lactones and 5- or 6-member ring lactones with aliphatic substituents but not simple lactones or those with polar substituents. This chain is Serum paraoxonase/lactonase 3 (PON3), found in Homo sapiens (Human).